Reading from the N-terminus, the 205-residue chain is Guanylyl cyclase-activating protein 1 (205 aa).

Gly2 carries the N-myristoyl glycine lipid modification. Asn3 is modified (deamidated asparagine). EF-hand domains lie at 14 to 49 (SSTE…KNLS), 51 to 86 (WASQ…VLKG), 87 to 122 (KVEQ…IRAI), and 131 to 166 (TAEE…DQML). Positions 64, 66, 68, 70, 75, 100, 102, 104, 106, 111, 144, 146, 148, 150, and 155 each coordinate Ca(2+). Residues 185 to 205 (NGEQDEEGASGRETEAAEADG) form a disordered region.

Homodimer. As to expression, detected in the retina. Detected in rod and cone photoreceptor cells (at protein level). Also present in certain pinealocytes.

The protein localises to the membrane. It localises to the photoreceptor inner segment. The protein resides in the cell projection. It is found in the cilium. Its subcellular location is the photoreceptor outer segment. Its function is as follows. Stimulates retinal guanylyl cyclase when free calcium ions concentration is low and inhibits guanylyl cyclase when free calcium ions concentration is elevated. This Ca(2+)-sensitive regulation of retinal guanylyl cyclase is a key event in recovery of the dark state of rod photoreceptors following light exposure. May be involved in cone photoreceptor light response and recovery of response in bright light. This is Guanylyl cyclase-activating protein 1 (GUCA1A) from Bos taurus (Bovine).